Reading from the N-terminus, the 772-residue chain is Acylamino-acid-releasing enzyme 2 (772 aa).

Active-site charge relay system residues include S617, D708, and H740.

This sequence belongs to the peptidase S9C family. As to quaternary structure, homotetramer.

The protein localises to the cytoplasm. It carries out the reaction Cleavage of an N-acetyl or N-formyl amino acid from the N-terminus of a polypeptide.. Functionally, catalyzes the hydrolysis of the N-terminal peptide bond of an N-acetylated peptide to generate an N-acetylated amino acid and a peptide with a free N-terminus. The chain is Acylamino-acid-releasing enzyme 2 from Oryza sativa subsp. japonica (Rice).